A 510-amino-acid chain; its full sequence is Cytochrome P450 11B2, mitochondrial (510 aa).

Residues Met-1–Leu-34 constitute a mitochondrion transit peptide. Position 391 (Phe-391) interacts with 21-hydroxyprogesterone. Cys-457 provides a ligand contact to heme.

This sequence belongs to the cytochrome P450 family. Heme serves as cofactor. Adrenal cortex.

The protein localises to the mitochondrion inner membrane. The catalysed reaction is a steroid + 2 reduced [adrenodoxin] + O2 + 2 H(+) = an 11beta-hydroxysteroid + 2 oxidized [adrenodoxin] + H2O. It carries out the reaction 21-hydroxyprogesterone + 2 reduced [adrenodoxin] + O2 + 2 H(+) = corticosterone + 2 oxidized [adrenodoxin] + H2O. It catalyses the reaction corticosterone + 2 reduced [adrenodoxin] + O2 + 2 H(+) = 18-hydroxycorticosterone + 2 oxidized [adrenodoxin] + H2O. The enzyme catalyses 18-hydroxycorticosterone + 2 reduced [adrenodoxin] + O2 + 2 H(+) = aldosterone + 2 oxidized [adrenodoxin] + 2 H2O. The catalysed reaction is 11-deoxycortisol + 2 reduced [adrenodoxin] + O2 + 2 H(+) = cortisol + 2 oxidized [adrenodoxin] + H2O. It carries out the reaction cortisol + 2 reduced [adrenodoxin] + O2 + 2 H(+) = 18-hydroxycortisol + 2 oxidized [adrenodoxin] + H2O. It catalyses the reaction 21-hydroxyprogesterone + 2 reduced [adrenodoxin] + O2 + 2 H(+) = 18-hydroxy-11-deoxycorticosterone + 2 oxidized [adrenodoxin] + H2O. The enzyme catalyses 18-hydroxycortisol + 2 reduced [adrenodoxin] + O2 + 2 H(+) = 18-oxocortisol + 2 oxidized [adrenodoxin] + 2 H2O. Its pathway is steroid biosynthesis. Its function is as follows. A cytochrome P450 monooxygenase that catalyzes the biosynthesis of aldosterone, the main mineralocorticoid responsible for salt and water homeostasis. Catalyzes three sequential oxidative reactions of 11-deoxycorticosterone (21-hydroxyprogesterone), namely 11-beta hydroxylation, followed by two successive oxidations at C18 yielding 18-hydroxy and then 18-oxo intermediates (that do not leave the enzyme active site during the consecutive hydroxylation reactions), and end with the formation of aldosterone. Can also produce 18-hydroxycortisol and 18-oxocortisol, derived from successive oxidations of cortisol at C18, normally found at very low levels, but significantly increased in primary aldosteronism, the most common form of secondary hypertension. Mechanistically, uses molecular oxygen inserting one oxygen atom into a substrate and reducing the second into a water molecule. Two electrons are provided by NADPH via a two-protein mitochondrial transfer system comprising flavoprotein FDXR (adrenodoxin/ferredoxin reductase) and nonheme iron-sulfur protein FDX1 or FDX2 (adrenodoxin/ferredoxin). Could also be involved in the androgen metabolic pathway. This is Cytochrome P450 11B2, mitochondrial (Cyp11b2) from Rattus norvegicus (Rat).